A 205-amino-acid chain; its full sequence is Pyrrolidone-carboxylate peptidase (205 aa).

Catalysis depends on residues E79, C142, and H165.

Belongs to the peptidase C15 family. As to quaternary structure, homotetramer.

The protein localises to the cytoplasm. The catalysed reaction is Release of an N-terminal pyroglutamyl group from a polypeptide, the second amino acid generally not being Pro.. Functionally, removes 5-oxoproline from various penultimate amino acid residues except L-proline. The protein is Pyrrolidone-carboxylate peptidase of Gloeobacter violaceus (strain ATCC 29082 / PCC 7421).